A 442-amino-acid polypeptide reads, in one-letter code: MSEILNIAKAAKASCEQLLNLSAQAKSQILNAVADELVRQKEAIKAANLLDLKAGENAGLSAALLDRLELTDARIEAMANGVREVAKFDEVVGEVLGGWRHPNGMQITKIRVPLGVLGIIYESRPNVSIDAAALALKSGNAVILRGSAAAISSNKFLVNLFNETGAKFGLPKGAVALVESTDKEAVGEMIKMHEFIDVLIPRGGKNLKDFIIQNATIPVIETGAGVCHIFVDESADVREAVEIIKNAKTQRPSTCNSVECVLLHERVAVKVLTSLARELDGVQLRVHEDLWAKFGENLGEISGDLDANLSGLKAEVKIGESSNGAQLVKADESDFGTEFLSLVLAVKCVSGVAEAVSYINSHSTHHSDAILSRDYANIERFLNAVDSAVVYANASTRFSDGGEFGFGGEIGISTQKLHARGPMGVRELTTSKYVVRGDGQIR.

Belongs to the gamma-glutamyl phosphate reductase family.

The protein localises to the cytoplasm. It carries out the reaction L-glutamate 5-semialdehyde + phosphate + NADP(+) = L-glutamyl 5-phosphate + NADPH + H(+). Its pathway is amino-acid biosynthesis; L-proline biosynthesis; L-glutamate 5-semialdehyde from L-glutamate: step 2/2. Functionally, catalyzes the NADPH-dependent reduction of L-glutamate 5-phosphate into L-glutamate 5-semialdehyde and phosphate. The product spontaneously undergoes cyclization to form 1-pyrroline-5-carboxylate. The sequence is that of Gamma-glutamyl phosphate reductase from Campylobacter curvus (strain 525.92).